The chain runs to 129 residues: Large ribosomal subunit protein uL22 (129 aa).

The protein belongs to the universal ribosomal protein uL22 family. As to quaternary structure, part of the 50S ribosomal subunit.

In terms of biological role, this protein binds specifically to 23S rRNA; its binding is stimulated by other ribosomal proteins, e.g. L4, L17, and L20. It is important during the early stages of 50S assembly. It makes multiple contacts with different domains of the 23S rRNA in the assembled 50S subunit and ribosome. The globular domain of the protein is located near the polypeptide exit tunnel on the outside of the subunit, while an extended beta-hairpin is found that lines the wall of the exit tunnel in the center of the 70S ribosome. The chain is Large ribosomal subunit protein uL22 from Sinorhizobium medicae (strain WSM419) (Ensifer medicae).